Here is a 399-residue protein sequence, read N- to C-terminus: Accessory Sec system protein translocase subunit SecY2 (399 aa).

10 consecutive transmembrane segments (helical) span residues 14 to 34, 60 to 80, 102 to 122, 128 to 148, 152 to 172, 184 to 204, 238 to 258, 272 to 292, 335 to 355, and 362 to 382; these read ILFTCFILIVYIFGSNISIVG, LNVFSLGLGPWLTSLVIIMLL, IITIVFAIFQSYFVISTYIHN, SNIILLMLILVAGTMLLVWLA, ITYGICGPMPIVLTSLIKSLF, VLLLILVIVTLVIALLILLFI, ISIMISLSVYVLLNNMINLIA, FANPIGIMFYIVLQIVLSYLL, WTGAILVALILAVPLYSTLLV, and IYFSMQLIILVYISINIGETI.

The protein belongs to the SecY/SEC61-alpha family. SecY2 subfamily. In terms of assembly, component of the accessory SecA2/SecY2 protein translocase complex required to export cell wall proteins. May form heterotrimers with SecE and SecG subunits.

The protein localises to the cell membrane. Functionally, part of the accessory SecA2/SecY2 system specifically required for export of possible cell wall proteins. The central subunit of a protein translocation channel. The sequence is that of Accessory Sec system protein translocase subunit SecY2 from Staphylococcus haemolyticus (strain JCSC1435).